Consider the following 299-residue polypeptide: GTPase Era (299 aa).

The 171-residue stretch at 5 to 175 (RSGFVCLVGR…IDVLAAALPP (171 aa)) folds into the Era-type G domain. The tract at residues 13–20 (GRPNTGKS) is G1. GTP is bound at residue 13 to 20 (GRPNTGKS). A G2 region spans residues 39–43 (QTTRH). Residues 60–63 (DTPG) form a G3 region. GTP contacts are provided by residues 60 to 64 (DTPGL) and 124 to 127 (TKID). The segment at 124 to 127 (TKID) is G4. Positions 154–156 (VSA) are G5. One can recognise a KH type-2 domain in the interval 206–285 (VRDELPHSLA…YLDLRVKVAK (80 aa)).

It belongs to the TRAFAC class TrmE-Era-EngA-EngB-Septin-like GTPase superfamily. Era GTPase family. In terms of assembly, monomer.

It localises to the cell envelope. The protein localises to the secreted. The protein resides in the cell wall. In terms of biological role, exhibits GTPase activity. Binds RNA but is probably not involved in ribosome assembly in mycobacteria. This chain is GTPase Era, found in Mycolicibacterium paratuberculosis (strain ATCC BAA-968 / K-10) (Mycobacterium paratuberculosis).